The chain runs to 149 residues: Aquaporin-like protein 2 (149 aa).

Residues 1–35 (MSNESNDLEKNISHLDPTGVDNAYIPPEQPETKHS) form a disordered region. Over 1 to 47 (MSNESNDLEKNISHLDPTGVDNAYIPPEQPETKHSRFNIDRDTLRNH) the chain is Cytoplasmic. A helical membrane pass occupies residues 48 to 68 (FIAAVGEFCGTFMFLWCAYVI). The Extracellular segment spans residues 69–89 (CNVANHDVALTTEPEGSHPGQ). Residues 90–110 (LIMIALGFGFSVMFSIWCFWW) traverse the membrane as a helical segment. The Cytoplasmic portion of the chain corresponds to 111–149 (GFEPSRFSLFVFGQSHLTSQMCSDVVSSDHCWDGCWWCR).

This sequence belongs to the MIP/aquaporin (TC 1.A.8) family.

The protein resides in the endoplasmic reticulum membrane. Its subcellular location is the cell membrane. In terms of biological role, water channel required to facilitate the transport of water across membranes. Involved in freeze tolerance, osmotolerance and cell flocculation in liquid cultures. Is non-functional in most laboratory strains. This chain is Aquaporin-like protein 2 (AQY2-2), found in Saccharomyces cerevisiae (strain JAY291) (Baker's yeast).